A 229-amino-acid polypeptide reads, in one-letter code: uncharacterized protein (229 aa).

One can recognise an HTH cro/C1-type domain in the interval 24–78 (LRKWRSIFNASQSDLARKLGISPSVISDYESGRRKPGTAFLKKFVCALIELDGER). Positions 35–54 (QSDLARKLGISPSVISDYES) form a DNA-binding region, H-T-H motif.

This is an uncharacterized protein from Archaeoglobus fulgidus (strain ATCC 49558 / DSM 4304 / JCM 9628 / NBRC 100126 / VC-16).